Reading from the N-terminus, the 518-residue chain is E3 ubiquitin-protein ligase TRIM39 (518 aa).

The RING-type zinc finger occupies 29 to 70; that stretch reads CSVCLEYLKEPVIIECGHNFCKACITRWWEDLERDFPCPVCR. Residues 102-143 form a B box-type zinc finger; that stretch reads RDESLCPQHHEALSLFCYEDQEAVCLICAISHTHRAHTVVPL. Residues Cys-107, His-110, Cys-129, and His-135 each contribute to the Zn(2+) site. The stretch at 181 to 250 forms a coiled coil; it reads ELKRLVESRR…AHLAAEVEGK (70 aa). 2 interaction with CDKN1A regions span residues 268–337 and 389–518; these read KNIP…QLIA and TSGR…TDWE. Residues 319-514 form the B30.2/SPRY domain; the sequence is SNFPRQYFAL…NAAPLTIRPP (196 aa).

Belongs to the TRIM/RBCC family. As to quaternary structure, interacts with MOAP1. Interacts with CDKN1A. Post-translationally, autoubiquitinated.

It is found in the cytoplasm. It localises to the cytosol. Its subcellular location is the mitochondrion. The protein localises to the nucleus. The catalysed reaction is S-ubiquitinyl-[E2 ubiquitin-conjugating enzyme]-L-cysteine + [acceptor protein]-L-lysine = [E2 ubiquitin-conjugating enzyme]-L-cysteine + N(6)-ubiquitinyl-[acceptor protein]-L-lysine.. It functions in the pathway protein modification; protein ubiquitination. In terms of biological role, E3 ubiquitin-protein ligase. May facilitate apoptosis by inhibiting APC/C-Cdh1-mediated poly-ubiquitination and subsequent proteasome-mediated degradation of the pro-apoptotic protein MOAP1. Regulates the G1/S transition of the cell cycle and DNA damage-induced G2 arrest by stabilizing CDKN1A/p21. Positively regulates CDKN1A/p21 stability by competing with DTL for CDKN1A/p21 binding, therefore disrupting DCX(DTL) E3 ubiquitin ligase complex-mediated CDKN1A/p21 ubiquitination and degradation. The sequence is that of E3 ubiquitin-protein ligase TRIM39 (TRIM39) from Pan troglodytes (Chimpanzee).